A 587-amino-acid polypeptide reads, in one-letter code: Formate--tetrahydrofolate ligase (587 aa).

73–80 (TPLGEGKS) contributes to the ATP binding site.

Belongs to the formate--tetrahydrofolate ligase family.

The enzyme catalyses (6S)-5,6,7,8-tetrahydrofolate + formate + ATP = (6R)-10-formyltetrahydrofolate + ADP + phosphate. It functions in the pathway one-carbon metabolism; tetrahydrofolate interconversion. The polypeptide is Formate--tetrahydrofolate ligase (Syntrophobacter fumaroxidans (strain DSM 10017 / MPOB)).